A 447-amino-acid chain; its full sequence is Rab GDP dissociation inhibitor alpha (447 aa).

S427 is subject to Phosphoserine.

This sequence belongs to the Rab GDI family. In terms of assembly, interacts with RHOH. Interacts with the non-phosphorylated forms of RAB1A, RAB3A, RAB5A, RAB5B, RAB5C, RAB8A, RAB8B, RAB10, RAB12, RAB35, and RAB43.

The protein localises to the cytoplasm. It localises to the golgi apparatus. It is found in the trans-Golgi network. In terms of biological role, regulates the GDP/GTP exchange reaction of most Rab proteins by inhibiting the dissociation of GDP from them, and the subsequent binding of GTP to them. Promotes the dissociation of GDP-bound Rab proteins from the membrane and inhibits their activation. Promotes the dissociation of RAB1A, RAB3A, RAB5A and RAB10 from membranes. This chain is Rab GDP dissociation inhibitor alpha (GDI1), found in Canis lupus familiaris (Dog).